The sequence spans 161 residues: Cytochrome c-type biogenesis protein CcmE (161 aa).

Residues Met-1–Arg-8 are Cytoplasmic-facing. Residues Leu-9 to Ala-29 form a helical; Signal-anchor for type II membrane protein membrane-spanning segment. The Periplasmic segment spans residues Leu-30 to Tyr-161. Heme contacts are provided by His-131 and Tyr-135.

It belongs to the CcmE/CycJ family.

It localises to the cell inner membrane. Its function is as follows. Heme chaperone required for the biogenesis of c-type cytochromes. Transiently binds heme delivered by CcmC and transfers the heme to apo-cytochromes in a process facilitated by CcmF and CcmH. This Shewanella woodyi (strain ATCC 51908 / MS32) protein is Cytochrome c-type biogenesis protein CcmE.